We begin with the raw amino-acid sequence, 570 residues long: Glutamate--tRNA ligase, chloroplastic/mitochondrial (570 aa).

The N-terminal 39 residues, 1 to 39 (MASLVYGTPWLRVRSLPELAPAFLRRRQSSLFYCSRRSF), are a transit peptide targeting the chloroplast and mitochondrion. 57–59 (RFA) contacts L-glutamate. Positions 60–70 (PSPTGNLHVGG) match the 'HIGH' region motif. Histidine 67 contacts ATP. L-glutamate-binding positions include glutamate 93, 245–249 (YNFCV), and arginine 263. ATP contacts are provided by residues glutamate 266 and 301–305 (KLSKR). The short motif at 301 to 305 (KLSKR) is the 'KMSKS' region element.

The protein belongs to the class-I aminoacyl-tRNA synthetase family. Glutamate--tRNA ligase type 1 subfamily.

The protein localises to the plastid. The protein resides in the chloroplast. It is found in the mitochondrion. The catalysed reaction is tRNA(Glu) + L-glutamate + ATP = L-glutamyl-tRNA(Glu) + AMP + diphosphate. Functionally, catalyzes the attachment of glutamate to tRNA(Glu) in a two-step reaction: glutamate is first activated by ATP to form Glu-AMP and then transferred to the acceptor end of tRNA(Glu). This is Glutamate--tRNA ligase, chloroplastic/mitochondrial from Arabidopsis thaliana (Mouse-ear cress).